Reading from the N-terminus, the 327-residue chain is Acetaldehyde dehydrogenase 6 (327 aa).

15–18 (SGNI) provides a ligand contact to NAD(+). Cys133 (acyl-thioester intermediate) is an active-site residue. NAD(+)-binding positions include 164-172 (SAGPGTRAN) and Asn297.

This sequence belongs to the acetaldehyde dehydrogenase family.

The enzyme catalyses acetaldehyde + NAD(+) + CoA = acetyl-CoA + NADH + H(+). The sequence is that of Acetaldehyde dehydrogenase 6 from Rhodococcus opacus (strain B4).